Reading from the N-terminus, the 393-residue chain is Acetylornithine aminotransferase (393 aa).

Pyridoxal 5'-phosphate-binding positions include 100-101 (GA) and phenylalanine 133. Residue arginine 136 coordinates N(2)-acetyl-L-ornithine. 218 to 221 (DEVQ) contacts pyridoxal 5'-phosphate. Position 247 is an N6-(pyridoxal phosphate)lysine (lysine 247). Serine 274 contacts N(2)-acetyl-L-ornithine. Threonine 275 provides a ligand contact to pyridoxal 5'-phosphate.

Belongs to the class-III pyridoxal-phosphate-dependent aminotransferase family. ArgD subfamily. As to quaternary structure, homodimer. The cofactor is pyridoxal 5'-phosphate.

It localises to the cytoplasm. It catalyses the reaction N(2)-acetyl-L-ornithine + 2-oxoglutarate = N-acetyl-L-glutamate 5-semialdehyde + L-glutamate. The protein operates within amino-acid biosynthesis; L-arginine biosynthesis; N(2)-acetyl-L-ornithine from L-glutamate: step 4/4. In Caldanaerobacter subterraneus subsp. tengcongensis (strain DSM 15242 / JCM 11007 / NBRC 100824 / MB4) (Thermoanaerobacter tengcongensis), this protein is Acetylornithine aminotransferase.